The primary structure comprises 685 residues: Methionine--tRNA ligase (685 aa).

The 'HIGH' region signature appears at 12-22 (PYANGSIHLGH). Zn(2+) contacts are provided by C143, C146, C156, and C159. The 'KMSKS' region motif lies at 339–343 (KMSKS). Residue K342 coordinates ATP. The tRNA-binding domain occupies 582–685 (DFMKIDMRVA…TGAQPGDKVG (104 aa)).

This sequence belongs to the class-I aminoacyl-tRNA synthetase family. MetG type 1 subfamily. Homodimer. It depends on Zn(2+) as a cofactor.

The protein resides in the cytoplasm. It carries out the reaction tRNA(Met) + L-methionine + ATP = L-methionyl-tRNA(Met) + AMP + diphosphate. Functionally, is required not only for elongation of protein synthesis but also for the initiation of all mRNA translation through initiator tRNA(fMet) aminoacylation. In Neisseria meningitidis serogroup B (strain ATCC BAA-335 / MC58), this protein is Methionine--tRNA ligase.